The chain runs to 90 residues: Small ribosomal subunit protein uS15 (90 aa).

The protein belongs to the universal ribosomal protein uS15 family. Part of the 30S ribosomal subunit. Forms a bridge to the 50S subunit in the 70S ribosome, contacting the 23S rRNA.

One of the primary rRNA binding proteins, it binds directly to 16S rRNA where it helps nucleate assembly of the platform of the 30S subunit by binding and bridging several RNA helices of the 16S rRNA. In terms of biological role, forms an intersubunit bridge (bridge B4) with the 23S rRNA of the 50S subunit in the ribosome. The sequence is that of Small ribosomal subunit protein uS15 from Thermotoga maritima (strain ATCC 43589 / DSM 3109 / JCM 10099 / NBRC 100826 / MSB8).